A 142-amino-acid polypeptide reads, in one-letter code: Hemoglobin subunit alpha-1/2 (142 aa).

Positions 2 to 142 constitute a Globin domain; sequence VLSADDKTNI…VSTVLTSKYR (141 aa). Ser-4 bears the Phosphoserine mark. Lys-8 carries the post-translational modification N6-succinyllysine. The residue at position 9 (Thr-9) is a Phosphothreonine. Lys-12 is modified (N6-succinyllysine). N6-acetyllysine; alternate is present on Lys-17. N6-succinyllysine; alternate is present on Lys-17. At Tyr-25 the chain carries Phosphotyrosine. Position 41 is an N6-succinyllysine (Lys-41). Position 50 is a phosphoserine (Ser-50). His-59 serves as a coordination point for O2. Residue His-88 coordinates heme b. Ser-103 is subject to Phosphoserine. The residue at position 109 (Thr-109) is a Phosphothreonine. A phosphoserine mark is found at Ser-125 and Ser-132. Thr-135 and Thr-138 each carry phosphothreonine. Ser-139 bears the Phosphoserine mark.

Belongs to the globin family. Heterotetramer of two alpha chains and two beta chains. As to expression, red blood cells.

Involved in oxygen transport from the lung to the various peripheral tissues. Functionally, hemopressin acts as an antagonist peptide of the cannabinoid receptor CNR1. Hemopressin-binding efficiently blocks cannabinoid receptor CNR1 and subsequent signaling. The polypeptide is Hemoglobin subunit alpha-1/2 (Hba1) (Rattus norvegicus (Rat)).